The primary structure comprises 166 residues: Ribosome maturation factor RimM (166 aa).

Residues 94–165 form the PRC barrel domain; that stretch reads EGEYYLGKLI…TIELKVLDLL (72 aa).

The protein belongs to the RimM family. Binds ribosomal protein uS19.

It localises to the cytoplasm. Functionally, an accessory protein needed during the final step in the assembly of 30S ribosomal subunit, possibly for assembly of the head region. Essential for efficient processing of 16S rRNA. May be needed both before and after RbfA during the maturation of 16S rRNA. It has affinity for free ribosomal 30S subunits but not for 70S ribosomes. This Borreliella afzelii (strain PKo) (Borrelia afzelii) protein is Ribosome maturation factor RimM.